The sequence spans 656 residues: Pheromone-processing carboxypeptidase KEX1 (656 aa).

A signal peptide spans 1-17; sequence MFFHAILVLIQVALALG. Residues 18-536 are Lumenal-facing; sequence ASPRAGSSER…DNNTSHKIER (519 aa). N61 and N118 each carry an N-linked (GlcNAc...) asparagine glycan. Residues S180 and D388 contribute to the active site. N-linked (GlcNAc...) asparagine glycosylation is found at N434 and N442. The active site involves H445. The helical transmembrane segment at 537–557 threads the bilayer; sequence AIQLLVIIVLLWGIYALYSSY. The Cytoplasmic portion of the chain corresponds to 558 to 656; that stretch reads KSRPSSIIKS…SRNEPSSNQK (99 aa). The tract at residues 626–656 is disordered; the sequence is MSSASPIDDFVVVSDDEEEEPSRNEPSSNQK.

Belongs to the peptidase S10 family.

The protein resides in the golgi apparatus. It is found in the trans-Golgi network membrane. It catalyses the reaction Preferential release of a C-terminal arginine or lysine residue.. In terms of biological role, protease with a carboxypeptidase B-like function involved in the C-terminal processing of the lysine and arginine residues from protein precursors. Promotes cell fusion and is involved in the programmed cell death. The chain is Pheromone-processing carboxypeptidase KEX1 (KEX1) from Meyerozyma guilliermondii (strain ATCC 6260 / CBS 566 / DSM 6381 / JCM 1539 / NBRC 10279 / NRRL Y-324) (Yeast).